A 436-amino-acid polypeptide reads, in one-letter code: UDP-N-acetylmuramate--L-alanine ligase (436 aa).

108-114 (GAHGKTS) is a binding site for ATP.

It belongs to the MurCDEF family.

It is found in the cytoplasm. The catalysed reaction is UDP-N-acetyl-alpha-D-muramate + L-alanine + ATP = UDP-N-acetyl-alpha-D-muramoyl-L-alanine + ADP + phosphate + H(+). Its pathway is cell wall biogenesis; peptidoglycan biosynthesis. Its function is as follows. Cell wall formation. The protein is UDP-N-acetylmuramate--L-alanine ligase of Bacillus cereus (strain B4264).